We begin with the raw amino-acid sequence, 525 residues long: Glutamate--cysteine ligase (525 aa).

Belongs to the glutamate--cysteine ligase type 1 family. Type 1 subfamily.

It carries out the reaction L-cysteine + L-glutamate + ATP = gamma-L-glutamyl-L-cysteine + ADP + phosphate + H(+). It functions in the pathway sulfur metabolism; glutathione biosynthesis; glutathione from L-cysteine and L-glutamate: step 1/2. The chain is Glutamate--cysteine ligase from Alcanivorax borkumensis (strain ATCC 700651 / DSM 11573 / NCIMB 13689 / SK2).